A 486-amino-acid chain; its full sequence is Kynurenine 3-monooxygenase (486 aa).

Residues V19, 37 to 40 (YEAR), and A57 contribute to the FAD site. Residues R85 and Y99 each coordinate L-kynurenine. FAD-binding positions include R111, L136, T172, D304, and 317–318 (MN). L-kynurenine contacts are provided by N363 and Y398. 2 helical membrane passes run 385 to 404 (FLHAIMPSTFIPLYTMVTFS) and 425 to 445 (GLFFLGSLIAISSTYLLIHYM). The N-linked (GlcNAc...) asparagine glycan is linked to N465.

It belongs to the aromatic-ring hydroxylase family. KMO subfamily. FAD serves as cofactor. As to expression, highest levels in placenta and liver. Detectable in kidney.

Its subcellular location is the mitochondrion outer membrane. The catalysed reaction is L-kynurenine + NADPH + O2 + H(+) = 3-hydroxy-L-kynurenine + NADP(+) + H2O. The protein operates within cofactor biosynthesis; NAD(+) biosynthesis; quinolinate from L-kynurenine: step 1/3. Functionally, catalyzes the hydroxylation of L-kynurenine (L-Kyn) to form 3-hydroxy-L-kynurenine (L-3OHKyn). Required for synthesis of quinolinic acid, a neurotoxic NMDA receptor antagonist and potential endogenous inhibitor of NMDA receptor signaling in axonal targeting, synaptogenesis and apoptosis during brain development. Quinolinic acid may also affect NMDA receptor signaling in pancreatic beta cells, osteoblasts, myocardial cells, and the gastrointestinal tract. This Homo sapiens (Human) protein is Kynurenine 3-monooxygenase.